Here is an 854-residue protein sequence, read N- to C-terminus: MFPFLAPIRSANHVEQQGTKYYVEITFLADSPYSRAPSSTGTEKSVIPTLRNLDDLETVSNKSRSSEGVNKLGSRPNSRSSAIVKKTSVSSLPTSARSEGKSSPIPVKDAIPAPARHKNKGLEMSSAMMELFGGGGSTSPAPSKRENPADAPSDRVVSNAKLSQPGPEWFEGFEQMDMTDIELPPDPNCPAEKVLRGEKSTPDFDSDWQEAKEDVLDPQSYPKSFNPAESLPGPDIGAGVDDEEEPEAEAQEMEEPQYESKVDEKDDDDNGSSSSKKGHPSEDGDSTRNGETPTDRRNSGAIEETADGESSAQSAAEKKNSGDDGNGGGGEMSILLVKNAQIVNDDAIFVADILIEDGIIQNVAPNLEAPEGAEVLDAAGKLALPAGIDVYTQVTDSSVDDLSTGCKSAIAGGTGTIVEVVRPRGAESVVSAVKRVKNQLEKSGISCHVALSVAITDFCEQEMSELVKNEGINSFVLDGVSLTDDKLLELFEHVKRLGALIRVVPENKSIVAMLEKKMLKLGVTGPEGFPQSRPESLEADRVSGVCVLGNLASCPISIVQVSSADSLAAIEKARASGALAHAEIASAAVTADGSALFSQDLRFASAHLTDVPLRRGAPDRMIGALSTQPLVVCTSGHRPVNSATRVAAKDFAIAQKGSTGAEERMAVVWERAVRSGRIDAMRFVAVTSTNAAKMFNMYPKKGRIAVGADADLVIWDASGKRVLESSRAQSSQENSMYDGLTVHSVVTATIVGGKIAYQNGEVREAPVAGGFLRLSPNSPYLFSMVGQRDKFANVERVEREASSQQQKPQQNGHHKNSGDFDRNRTKVMESSIDFGGSAANRPRNPPGGRTTGFW.

Disordered stretches follow at residues 57–114 (ETVS…IPAP), 130–327 (ELFG…DGNG), and 794–854 (VERV…TGFW). Composition is skewed to polar residues over residues 58–68 (TVSNKSRSSEG) and 75–97 (RPNS…TSAR). Positions 193–202 (KVLRGEKSTP) are enriched in basic and acidic residues. A compositionally biased stretch (acidic residues) spans 240 to 257 (VDDEEEPEAEAQEMEEPQ). Positions 279-298 (HPSEDGDSTRNGETPTDRRN) are enriched in basic and acidic residues. Residues 802–811 (SSQQQKPQQN) are compositionally biased toward polar residues. Positions 816 to 827 (NSGDFDRNRTKV) are enriched in basic and acidic residues.

The protein belongs to the metallo-dependent hydrolases superfamily. Hydantoinase/dihydropyrimidinase family. In terms of assembly, isoform a: Probable monomer. Isoform b: Probable homodimer. Isoform c: Probable homodimer. Probable heterodimer composed of isoform b and isoform c. Interacts with unc-14 and kinesin-1 motor complex light chain klc-1; both interactions regulate unc-33 neurite localization. Interacts with fln-1 (via calponin-homology (CH) domains and filamin repeat 18-19). Isoform c: Interacts with vab-8 isoform a. In terms of tissue distribution, expressed in ventral cord and nerve ring (at protein level). Isoform a: Expressed in nerve ring (at protein level). Expressed in the nervous system, two amphid socket cells and weakly in non-neuronal pharyngeal cells.

Its subcellular location is the cell projection. The protein resides in the axon. It is found in the dendrite. Functionally, during neurogenesis, plays an essential role in axonal guidance and outgrowth by regulating the polarization of both microtubule and actin cytoskeletons. Establishes the asymmetry of axonal and dendrite microtubules and the polarized sorting of neuronal proteins. This is achieved in part by regulating the localization of kinesin-like protein unc-104. In neurons without a distal microtubule-organizing center (MTOC), also controls the organization of microtubules in dendrites. During the dorso-ventral axonal guidance and outgrowth of VD neurons, required downstream of Rac GTPases ced-10 and mig-2 to inhibit growth cone filopodial protrusion mediated by the unc-6/netrin receptor unc-40-unc-5. Specifically, regulates growth cone filopodial protrusion polarity, and thus migration, by promoting F-actin polarization and by restricting plus-end microtubule accumulation in the growth cone. Probably downstream of mab-20/Sema2a and mab-20 receptor plx-2, regulates the guidance of DD/VD neuron axons by modulating fln-1 interaction with F-actin which results in the remodeling of the actin cytoskeleton. In hermaphrodites, involved in sex myoblast (SM) migration by regulating the gonad-dependent repulsion of SMs. Its function is as follows. In neurons, required for the polarized sorting of axonal proteins. In PLM neuron, regulates innexin unc-9 gap junction turnover by suppressing unc-9 transport out of gap junctions. Plays a role in locomotion and egg-laying. In terms of biological role, in PLM neuron, regulates innexin unc-9 gap junction turnover by suppressing unc-9 transport out of gap junctions. In Caenorhabditis elegans, this protein is Protein unc-33.